A 668-amino-acid polypeptide reads, in one-letter code: MNSSKTTPQRLAVSIVCSLAAGFCAASLYVTFRHGFNGEAMMTFSVFAFWYETPLYMGHATPVFYCGLAIVVSTSIVVLLSQLIISFRNHEHHGTARWAGFGEMRHAGYLQRYNRIKGPIFGKTCGPRWFGSYLTNGEQPHSLVVAPTRAGKGVGVVIPTLLTFKGSVIALDVKGELFELTSRARKAGGDAVFKFSPLDPERRTHCYNPVLDIAALPPERQFTETRRLAANLITAKGKGAEGFIDGARDLFVAGILTCIERGTPTIGAVYDLFAQPGEKYKLFAHLAEESRNKEAQRIFDNMAGNDTKILTSYTSVLGDGGLNLWADPLVKAATSRSDFSVYDLRRKRTCVYLCVSPNDLEVVAPLMRLLFQQVVSILQRSLPGKDERHEVLFLLDEFKHLGKLEAIETAITTIAGYKGRFMFIIQSLSALTGIYDDAGKQNFLSNTGVQVFMATADDETPTYISKAIGDYTFKARSTSYSQARMFDHNIQISDQGAPLLRPEQVRLLDDNNEIVLIKGHPPLKLRKVRYYSDRMLRRLFECQIGALPEPASLMLSEGVHRDGQDLSQQAAVTEAQGLGDIDSIPNNMEAATPQNSEMDDEQDSLPTGIDVPQGLIESDEVKEDAGGVVPDFGVSAEMAPAMIAQQQLLEQIIALQQRYGPASSHSVK.

A run of 3 helical transmembrane segments spans residues 12–32 (AVSIVCSLAAGFCAASLYVTF), 67–87 (GLAIVVSTSIVVLLSQLIISF), and 153–173 (GVGVVIPTLLTFKGSVIALDV). A disordered region spans residues 577-612 (GLGDIDSIPNNMEAATPQNSEMDDEQDSLPTGIDVP).

Belongs to the VirD4/TraG family.

The protein localises to the cell membrane. The chain is Protein VirD4 (virD4) from Agrobacterium fabrum (strain C58 / ATCC 33970) (Agrobacterium tumefaciens (strain C58)).